The chain runs to 306 residues: Pantothenate kinase (306 aa).

Residue 91–98 (GSVAVGKS) coordinates ATP.

This sequence belongs to the prokaryotic pantothenate kinase family.

It localises to the cytoplasm. The enzyme catalyses (R)-pantothenate + ATP = (R)-4'-phosphopantothenate + ADP + H(+). Its pathway is cofactor biosynthesis; coenzyme A biosynthesis; CoA from (R)-pantothenate: step 1/5. This chain is Pantothenate kinase, found in Streptococcus pneumoniae (strain 70585).